The sequence spans 176 residues: Large ribosomal subunit protein uL10 (176 aa).

The protein belongs to the universal ribosomal protein uL10 family. As to quaternary structure, part of the ribosomal stalk of the 50S ribosomal subunit. The N-terminus interacts with L11 and the large rRNA to form the base of the stalk. The C-terminus forms an elongated spine to which L12 dimers bind in a sequential fashion forming a multimeric L10(L12)X complex.

Functionally, forms part of the ribosomal stalk, playing a central role in the interaction of the ribosome with GTP-bound translation factors. The polypeptide is Large ribosomal subunit protein uL10 (Saccharophagus degradans (strain 2-40 / ATCC 43961 / DSM 17024)).